A 305-amino-acid chain; its full sequence is UDP-3-O-acyl-N-acetylglucosamine deacetylase (305 aa).

Residues histidine 79, histidine 238, and aspartate 242 each coordinate Zn(2+). Histidine 265 (proton donor) is an active-site residue.

This sequence belongs to the LpxC family. Requires Zn(2+) as cofactor.

It catalyses the reaction a UDP-3-O-[(3R)-3-hydroxyacyl]-N-acetyl-alpha-D-glucosamine + H2O = a UDP-3-O-[(3R)-3-hydroxyacyl]-alpha-D-glucosamine + acetate. The protein operates within glycolipid biosynthesis; lipid IV(A) biosynthesis; lipid IV(A) from (3R)-3-hydroxytetradecanoyl-[acyl-carrier-protein] and UDP-N-acetyl-alpha-D-glucosamine: step 2/6. In terms of biological role, catalyzes the hydrolysis of UDP-3-O-myristoyl-N-acetylglucosamine to form UDP-3-O-myristoylglucosamine and acetate, the committed step in lipid A biosynthesis. The sequence is that of UDP-3-O-acyl-N-acetylglucosamine deacetylase from Escherichia coli O45:K1 (strain S88 / ExPEC).